Here is a 100-residue protein sequence, read N- to C-terminus: Aspartyl/glutamyl-tRNA(Asn/Gln) amidotransferase subunit C (100 aa).

Belongs to the GatC family. As to quaternary structure, heterotrimer of A, B and C subunits.

The enzyme catalyses L-glutamyl-tRNA(Gln) + L-glutamine + ATP + H2O = L-glutaminyl-tRNA(Gln) + L-glutamate + ADP + phosphate + H(+). It catalyses the reaction L-aspartyl-tRNA(Asn) + L-glutamine + ATP + H2O = L-asparaginyl-tRNA(Asn) + L-glutamate + ADP + phosphate + 2 H(+). Functionally, allows the formation of correctly charged Asn-tRNA(Asn) or Gln-tRNA(Gln) through the transamidation of misacylated Asp-tRNA(Asn) or Glu-tRNA(Gln) in organisms which lack either or both of asparaginyl-tRNA or glutaminyl-tRNA synthetases. The reaction takes place in the presence of glutamine and ATP through an activated phospho-Asp-tRNA(Asn) or phospho-Glu-tRNA(Gln). The protein is Aspartyl/glutamyl-tRNA(Asn/Gln) amidotransferase subunit C of Staphylococcus haemolyticus (strain JCSC1435).